The sequence spans 337 residues: MKKFIFFFKNYCYISGSMLLFSLIDLLLWIISLYCVGLVFWILFVLQCIYFVWWLWKNIFYQLNSFGLVNFVWDNPLSVIIGKLGTGKTLLLTYLSQTMKLLTDEIYSNYPLEDDKVKVLTFKNLDFTDRTKPVPPDDSVILFDESYLYIDGTSPHDEKKVHSGKIPWIVLARHFGNRALFTAQREGMIWNNIRQLASGIIIPISLKKPVIKKGFNFFNRFFIMQIGIFQDITDYEIWKTKSVERTAEGKRVKHKSDVGLGIRFFKIIIPLEFANKYDSQWLKFVRDLKNDEIVNKKEYYWSEITKLSVKERLELFDIDILKKNLKPKKEKGNGKDD.

2 consecutive transmembrane segments (helical) span residues 4 to 24 and 26 to 46; these read FIFF…FSLI and LLLW…LFVL.

Belongs to the plectrovirus ORF2 family.

Its subcellular location is the host membrane. This is an uncharacterized protein from Spiroplasma virus SpV1-R8A2 B (SpV1).